The primary structure comprises 274 residues: Thiamine kinase (274 aa).

Belongs to the thiamine kinase family.

It carries out the reaction thiamine + ATP = thiamine phosphate + ADP + H(+). The protein operates within cofactor biosynthesis; thiamine diphosphate biosynthesis; thiamine phosphate from thiamine: step 1/1. Catalyzes the ATP-dependent phosphorylation of thiamine to thiamine phosphate. Is involved in thiamine salvage. This chain is Thiamine kinase, found in Salmonella paratyphi A (strain ATCC 9150 / SARB42).